Consider the following 68-residue polypeptide: Putative alpha-conotoxin Qc alphaL-1 (68 aa).

Residues 1-21 (MGMRMMFTMFLLVVLATTVVS) form the signal peptide. A propeptide spanning residues 22 to 49 (INLDHAFDGRNAAANNKATDLMARTVRR) is cleaved from the precursor. Cysteine 51 and cysteine 64 are disulfide-bonded.

The protein belongs to the conotoxin A superfamily. Expressed by the venom duct.

The protein localises to the secreted. Functionally, alpha-conotoxins act on postsynaptic membranes, they bind to the nicotinic acetylcholine receptors (nAChR) and thus inhibit them. This Conus quercinus (Oak cone) protein is Putative alpha-conotoxin Qc alphaL-1.